The following is a 179-amino-acid chain: Cell division protein SepF (179 aa).

Residues 18-55 (EDSSLPYEKRDEPVFTPVNSSQEPALPMNQPSQSAGTK) are disordered. Over residues 34-55 (PVNSSQEPALPMNQPSQSAGTK) the composition is skewed to polar residues.

The protein belongs to the SepF family. As to quaternary structure, homodimer. Interacts with FtsZ.

Its subcellular location is the cytoplasm. Its function is as follows. Cell division protein that is part of the divisome complex and is recruited early to the Z-ring. Probably stimulates Z-ring formation, perhaps through the cross-linking of FtsZ protofilaments. Its function overlaps with FtsA. This is Cell division protein SepF from Streptococcus pneumoniae (strain ATCC 700669 / Spain 23F-1).